The chain runs to 146 residues: Endoribonuclease YbeY (146 aa).

3 residues coordinate Zn(2+): H108, H112, and H118.

Belongs to the endoribonuclease YbeY family. The cofactor is Zn(2+).

Its subcellular location is the cytoplasm. Functionally, single strand-specific metallo-endoribonuclease involved in late-stage 70S ribosome quality control and in maturation of the 3' terminus of the 16S rRNA. This Onion yellows phytoplasma (strain OY-M) protein is Endoribonuclease YbeY.